Reading from the N-terminus, the 153-residue chain is MLLYHIVGASVLICLLNETAKAIIGVDECQATPVIHFLQYPGCVPKPIPSYACRGRCSSYLQVSGSKIWQMERSCMCCQESGEREASVSLFCPRAKPGEKKFRKVITKAPLECMCRPCTSVEEYAIIPQEIAGFADEGPFTTSAHFRRSSDLQ.

The N-terminal stretch at 1 to 22 (MLLYHIVGASVLICLLNETAKA) is a signal peptide. 5 cysteine pairs are disulfide-bonded: cysteine 29/cysteine 78, cysteine 43/cysteine 92, cysteine 53/cysteine 113, cysteine 57/cysteine 115, and cysteine 75/cysteine 118. The CTCK domain maps to 29 to 119 (CQATPVIHFL…PLECMCRPCT (91 aa)).

In terms of assembly, heterodimer of burs and pburs.

Its subcellular location is the secreted. In terms of biological role, final heterodimeric neurohormone released at the end of the molting cycle, involved in the sclerotization (tanning) of the insect cuticle, melanization and wing spreading. The polypeptide is Bursicon (Apis mellifera (Honeybee)).